The following is an 81-amino-acid chain: Sulfur carrier protein TusA (81 aa).

Cys19 (cysteine persulfide intermediate) is an active-site residue.

It belongs to the sulfur carrier protein TusA family. In terms of assembly, interacts with IscS.

The protein localises to the cytoplasm. It functions in the pathway tRNA modification. Its function is as follows. Sulfur carrier protein involved in sulfur trafficking in the cell. Part of a sulfur-relay system required for 2-thiolation during synthesis of 2-thiouridine of the modified wobble base 5-methylaminomethyl-2-thiouridine (mnm(5)s(2)U) in tRNA. Interacts with IscS and stimulates its cysteine desulfurase activity. Accepts an activated sulfur from IscS, which is then transferred to TusD, and thus determines the direction of sulfur flow from IscS to 2-thiouridine formation. Also appears to be involved in sulfur transfer for the biosynthesis of molybdopterin. The protein is Sulfur carrier protein TusA of Klebsiella pneumoniae subsp. pneumoniae (strain ATCC 700721 / MGH 78578).